The chain runs to 163 residues: Protein-export protein SecB (163 aa).

Belongs to the SecB family. As to quaternary structure, homotetramer, a dimer of dimers. One homotetramer interacts with 1 SecA dimer.

The protein resides in the cytoplasm. Its function is as follows. One of the proteins required for the normal export of preproteins out of the cell cytoplasm. It is a molecular chaperone that binds to a subset of precursor proteins, maintaining them in a translocation-competent state. It also specifically binds to its receptor SecA. This Burkholderia ambifaria (strain MC40-6) protein is Protein-export protein SecB.